The chain runs to 310 residues: Ribosomal RNA small subunit methyltransferase H (310 aa).

S-adenosyl-L-methionine contacts are provided by residues 32–34, D52, F79, D100, and Q107; that span reads GGH.

The protein belongs to the methyltransferase superfamily. RsmH family.

It is found in the cytoplasm. It carries out the reaction cytidine(1402) in 16S rRNA + S-adenosyl-L-methionine = N(4)-methylcytidine(1402) in 16S rRNA + S-adenosyl-L-homocysteine + H(+). Functionally, specifically methylates the N4 position of cytidine in position 1402 (C1402) of 16S rRNA. The protein is Ribosomal RNA small subunit methyltransferase H of Bacillus thuringiensis subsp. konkukian (strain 97-27).